A 183-amino-acid polypeptide reads, in one-letter code: Peptide deformylase (183 aa).

Positions 110 and 153 each coordinate Fe cation. Glu-154 is an active-site residue. His-157 contributes to the Fe cation binding site.

The protein belongs to the polypeptide deformylase family. Requires Fe(2+) as cofactor.

It catalyses the reaction N-terminal N-formyl-L-methionyl-[peptide] + H2O = N-terminal L-methionyl-[peptide] + formate. Its function is as follows. Removes the formyl group from the N-terminal Met of newly synthesized proteins. Requires at least a dipeptide for an efficient rate of reaction. N-terminal L-methionine is a prerequisite for activity but the enzyme has broad specificity at other positions. This chain is Peptide deformylase, found in Oceanobacillus iheyensis (strain DSM 14371 / CIP 107618 / JCM 11309 / KCTC 3954 / HTE831).